The chain runs to 259 residues: Polycomb group RING finger protein 1 (259 aa).

Residues 45–84 (CYLCAGYFIDATTITECLHTFCKSCIVKYLQTSKYCPLCN) form an RING-type zinc finger.

Component of a PRC1-like complex.

It is found in the nucleus. Functionally, component of a Polycomb group (PcG) multiprotein PRC1-like complex, a complex class required to maintain the transcriptionally repressive state of many genes, including Hox genes, throughout development. PcG PRC1 complex acts via chromatin remodeling and modification of histones; it mediates monoubiquitination of histone H2A 'Lys-119', rendering chromatin heritably changed in its expressibility. This chain is Polycomb group RING finger protein 1 (pcgf1), found in Xenopus tropicalis (Western clawed frog).